A 351-amino-acid chain; its full sequence is Xaa-Pro dipeptidase (351 aa).

Residues D212, D223, H287, E316, and E330 each coordinate Co(2+).

It belongs to the peptidase M24B family. Archaeal-type prolidase subfamily. Homodimer. Co(2+) serves as cofactor.

It localises to the cytoplasm. It carries out the reaction Xaa-L-Pro dipeptide + H2O = an L-alpha-amino acid + L-proline. Its function is as follows. Splits dipeptides with a prolyl in the C-terminal position and a nonpolar amino acid at the N-terminal position. The chain is Xaa-Pro dipeptidase (pepQ) from Pyrococcus horikoshii (strain ATCC 700860 / DSM 12428 / JCM 9974 / NBRC 100139 / OT-3).